We begin with the raw amino-acid sequence, 590 residues long: Putative sodium/calcium exchanger 6 (590 aa).

The first 19 residues, 1 to 19 (MRIHFFAFLIILSLVGCDG), serve as a signal peptide directing secretion. 11 consecutive transmembrane segments (helical) span residues 97–117 (IILI…VSSA), 139–159 (VAGV…GAIA), 173–193 (LGEL…VTIF), 208–228 (IAFY…YDHV), 230–250 (IWMP…VILS), 368–388 (PITL…IQVC), 397–417 (PGLW…VLFF), 440–460 (IAWI…LGVV), 499–519 (AAAI…PFTI), 535–555 (YRLL…AMFA), and 568–588 (LVFI…DILV).

The protein belongs to the Ca(2+):cation antiporter (CaCA) (TC 2.A.19) family.

It is found in the membrane. In Caenorhabditis elegans, this protein is Putative sodium/calcium exchanger 6 (ncx-6).